We begin with the raw amino-acid sequence, 347 residues long: uncharacterized protein (347 aa).

This is an uncharacterized protein from Caenorhabditis elegans.